Reading from the N-terminus, the 292-residue chain is 33 kDa chaperonin (292 aa).

Disulfide bonds link Cys-230/Cys-232 and Cys-263/Cys-266.

Belongs to the HSP33 family. In terms of processing, under oxidizing conditions two disulfide bonds are formed involving the reactive cysteines. Under reducing conditions zinc is bound to the reactive cysteines and the protein is inactive.

The protein localises to the cytoplasm. Redox regulated molecular chaperone. Protects both thermally unfolding and oxidatively damaged proteins from irreversible aggregation. Plays an important role in the bacterial defense system toward oxidative stress. In Escherichia coli O7:K1 (strain IAI39 / ExPEC), this protein is 33 kDa chaperonin.